We begin with the raw amino-acid sequence, 355 residues long: MGGKTFMLMAGGTGGHIFPALAVADSLRARGHHVIWLGSKDSMEERIVPQYGIRLETLAIKGVRGNGIKRKLMLPVTLYQTVREAQRIIRKHRVECVIGFGGFVTFPGGLAAKLLGVPIVIHEQNAVAGLSNRHLSRWAKRVLYAFPKAFSHEGGLVGNPVRADISNLPVPAERFQGREGRLKILVVGGSLGADVLNKTVPQALALLPDNARPQMYHQSGRGKLGSLQADYDALGVKAECVEFITDMVSAYRDADLVICRAGALTIAELTAAGLGALLVPYPHAVDDHQTANARFMVQAEAGLLLPQTQLTAEKLAEILGGLNREKCLKWAENARTLALPHSADDVAEAAIACAA.

UDP-N-acetyl-alpha-D-glucosamine-binding positions include 13 to 15, Asn125, Arg162, Ser190, Ile244, and Gln289; that span reads TGG.

Belongs to the glycosyltransferase 28 family. MurG subfamily.

Its subcellular location is the cell inner membrane. The enzyme catalyses di-trans,octa-cis-undecaprenyl diphospho-N-acetyl-alpha-D-muramoyl-L-alanyl-D-glutamyl-meso-2,6-diaminopimeloyl-D-alanyl-D-alanine + UDP-N-acetyl-alpha-D-glucosamine = di-trans,octa-cis-undecaprenyl diphospho-[N-acetyl-alpha-D-glucosaminyl-(1-&gt;4)]-N-acetyl-alpha-D-muramoyl-L-alanyl-D-glutamyl-meso-2,6-diaminopimeloyl-D-alanyl-D-alanine + UDP + H(+). The protein operates within cell wall biogenesis; peptidoglycan biosynthesis. In terms of biological role, cell wall formation. Catalyzes the transfer of a GlcNAc subunit on undecaprenyl-pyrophosphoryl-MurNAc-pentapeptide (lipid intermediate I) to form undecaprenyl-pyrophosphoryl-MurNAc-(pentapeptide)GlcNAc (lipid intermediate II). This chain is UDP-N-acetylglucosamine--N-acetylmuramyl-(pentapeptide) pyrophosphoryl-undecaprenol N-acetylglucosamine transferase, found in Neisseria meningitidis serogroup B (strain ATCC BAA-335 / MC58).